The sequence spans 142 residues: Nucleoside diphosphate kinase (142 aa).

Positions 9, 57, 85, 91, 102, and 112 each coordinate ATP. The segment at 87–106 (AMGATDPAKSEKGTVRGDLG) is disordered. His115 functions as the Pros-phosphohistidine intermediate in the catalytic mechanism.

This sequence belongs to the NDK family. In terms of assembly, homotetramer. Mg(2+) serves as cofactor.

The protein resides in the cytoplasm. It carries out the reaction a 2'-deoxyribonucleoside 5'-diphosphate + ATP = a 2'-deoxyribonucleoside 5'-triphosphate + ADP. The catalysed reaction is a ribonucleoside 5'-diphosphate + ATP = a ribonucleoside 5'-triphosphate + ADP. In terms of biological role, major role in the synthesis of nucleoside triphosphates other than ATP. The ATP gamma phosphate is transferred to the NDP beta phosphate via a ping-pong mechanism, using a phosphorylated active-site intermediate. This chain is Nucleoside diphosphate kinase, found in Dehalococcoides mccartyi (strain ATCC BAA-2266 / KCTC 15142 / 195) (Dehalococcoides ethenogenes (strain 195)).